The following is a 902-amino-acid chain: Aconitate hydratase A (902 aa).

[4Fe-4S] cluster-binding residues include Cys-441, Cys-507, and Cys-510.

Belongs to the aconitase/IPM isomerase family. As to quaternary structure, monomer. Requires [4Fe-4S] cluster as cofactor.

It catalyses the reaction citrate = D-threo-isocitrate. It carries out the reaction (2S,3R)-3-hydroxybutane-1,2,3-tricarboxylate = 2-methyl-cis-aconitate + H2O. Its pathway is carbohydrate metabolism; tricarboxylic acid cycle; isocitrate from oxaloacetate: step 2/2. It participates in organic acid metabolism; propanoate degradation. Involved in the catabolism of short chain fatty acids (SCFA) via the tricarboxylic acid (TCA)(acetyl degradation route) and probably the 2-methylcitrate cycle I (propionate degradation route). Catalyzes the reversible isomerization of citrate to isocitrate via cis-aconitate. Also able to catalyze the hydration of cis-homoaconitate to yield (R)-homocitrate, but with a lower efficiency. Could catalyze the hydration of 2-methyl-cis-aconitate to yield (2R,3S)-2-methylisocitrate. The apo form of AcnA functions as a RNA-binding regulatory protein. This chain is Aconitate hydratase A (acoA), found in Thermus thermophilus (strain ATCC 27634 / DSM 579 / HB8).